A 191-amino-acid chain; its full sequence is Accessory gene regulator protein B (191 aa).

5 helical membrane-spanning segments follow: residues 45–65 (IVVYGLALLFHVFLYTLTVHL), 81–101 (STFACYIESIILFVILPWILI), 108–128 (IFMIVLAAVAFILICLYSPAI), 144–164 (ITAIFVAGILLIISFFIKQPF), and 165–185 (NELVQLGIVLIGAAQLPIFFP).

This sequence belongs to the AgrB family.

The protein localises to the cell membrane. Essential for the production of a quorum sensing system signal molecule, the autoinducing peptide (AIP). This quorum sensing system is responsible for the regulation of the expression of virulence factor genes. Involved in the proteolytic processing of AgrD, the precursor of AIP. In Staphylococcus carnosus (strain TM300), this protein is Accessory gene regulator protein B.